A 247-amino-acid polypeptide reads, in one-letter code: Adenosylcobinamide-GDP ribazoletransferase (247 aa).

5 helical membrane passes run 34–54 (IITF…VFMV), 59–79 (CGVP…TGGF), 113–133 (GGLA…ELTL), 138–158 (ILAS…LLMY), and 194–214 (VLLP…AIFI).

This sequence belongs to the CobS family. The cofactor is Mg(2+).

The protein resides in the cell inner membrane. It carries out the reaction alpha-ribazole + adenosylcob(III)inamide-GDP = adenosylcob(III)alamin + GMP + H(+). It catalyses the reaction alpha-ribazole 5'-phosphate + adenosylcob(III)inamide-GDP = adenosylcob(III)alamin 5'-phosphate + GMP + H(+). The protein operates within cofactor biosynthesis; adenosylcobalamin biosynthesis; adenosylcobalamin from cob(II)yrinate a,c-diamide: step 7/7. In terms of biological role, joins adenosylcobinamide-GDP and alpha-ribazole to generate adenosylcobalamin (Ado-cobalamin). Also synthesizes adenosylcobalamin 5'-phosphate from adenosylcobinamide-GDP and alpha-ribazole 5'-phosphate. This chain is Adenosylcobinamide-GDP ribazoletransferase, found in Escherichia coli O127:H6 (strain E2348/69 / EPEC).